The following is a 1063-amino-acid chain: Exportin-T (1063 aa).

The protein belongs to the exportin family.

It is found in the nucleus. The protein localises to the cytoplasm. TRNA nucleus export receptor which facilitates tRNA translocation across the nuclear pore complex. Involved in pre-tRNA splicing, probably by affecting the interaction of pre-tRNA with splicing endonuclease. The sequence is that of Exportin-T (LOS1) from Kluyveromyces lactis (strain ATCC 8585 / CBS 2359 / DSM 70799 / NBRC 1267 / NRRL Y-1140 / WM37) (Yeast).